The sequence spans 841 residues: Probable inorganic carbon transporter subunit DabA 1 (841 aa).

Positions 352, 354, 536, and 551 each coordinate Zn(2+).

Belongs to the inorganic carbon transporter (TC 9.A.2) DabA family. As to quaternary structure, forms a complex with DabB. Zn(2+) is required as a cofactor.

It localises to the cell inner membrane. Part of an energy-coupled inorganic carbon pump. The sequence is that of Probable inorganic carbon transporter subunit DabA 1 from Bradyrhizobium sp. (strain ORS 278).